The chain runs to 142 residues: Small heat shock protein IbpB (142 aa).

One can recognise a sHSP domain in the interval 26 to 137 (AGESQSFPPY…APQRIAISER (112 aa)).

It belongs to the small heat shock protein (HSP20) family. Homodimer. Forms homomultimers of about 100-150 subunits at optimal growth temperatures. Conformation changes to oligomers at high temperatures or high ionic concentrations. The decrease in size of the multimers is accompanied by an increase in chaperone activity.

The protein resides in the cytoplasm. Its function is as follows. Associates with aggregated proteins, together with IbpA, to stabilize and protect them from irreversible denaturation and extensive proteolysis during heat shock and oxidative stress. Aggregated proteins bound to the IbpAB complex are more efficiently refolded and reactivated by the ATP-dependent chaperone systems ClpB and DnaK/DnaJ/GrpE. Its activity is ATP-independent. In Klebsiella pneumoniae subsp. pneumoniae (strain ATCC 700721 / MGH 78578), this protein is Small heat shock protein IbpB.